Reading from the N-terminus, the 720-residue chain is MTEPEITPELIAAHGLKPDEYQRILEIIGRAPTFTELGIFSAMWNEHCSYKSSKKWLRTLPTTGPQVICGPGENAGVVDIGDGQAVIFKMESHNHPSYIEPYQGAATGVGGILRDVFTMGARPIAAMNALSFGEPSHPKTAHIVKGVVEGIGGYGNAFGVPTVGGEVRFHRAYNGNCLVNAFAAGLADADRIFYSAASGVGMPVVYLGAKTGRDGVGGATMASAEFDDTIEEKRPTVQVGDPFTEKRLLEACLELMASDSVISIQDMGAAGLTCSAVEMGDKGDLGIRLQLDAVPQREANMTAYEMMLSESQERMLMVLKPEKEAVARAIFEKWDLDFAIVGETIPEDRFLILHGNEVKADLPLKALSGTAPEYDRPWIETPAAAPLGAVPEVDPIEGLKALIGSPSYAHKAWVWEQYDSQVMADTVRAPGLGAGVVRVHGTPKALAFTSDVTPRYVKANPFEGGKQAVAEAYRNLTAVGARPLATTDNMNFGNPEKPEIMGQFVGAIEGIGAAVAALDMPIVSGNVSLYNETDGVGILPTPTIGAVGLLTSLDELIAGEPQAGDLALVIGTTAGHLGQSALLAEMFGREEGDAPPVDLEAEKRHGEFLRANRKLVRAAADLSDGGLALAAFEMAEAAGLGLTLTPSGTAALFGEDQARYLVACAPDRAEALQAAAEAAGVPLQEVGRFGGAAVTLAGASAPLADLSRLYRRAFAEAIGG.

The active site involves His47. ATP-binding residues include Tyr50 and Lys89. Glu91 provides a ligand contact to Mg(2+). Substrate contacts are provided by residues 92–95 (SHNH) and Arg114. His93 serves as the catalytic Proton acceptor. Asp115 serves as a coordination point for Mg(2+). Gln238 lines the substrate pocket. Asp266 is a binding site for Mg(2+). Residue 310 to 312 (ESQ) participates in substrate binding. ATP is bound by residues Asp488 and Gly525. Residue Asn526 participates in Mg(2+) binding. Ser528 lines the substrate pocket.

It belongs to the FGAMS family. Monomer. Part of the FGAM synthase complex composed of 1 PurL, 1 PurQ and 2 PurS subunits.

The protein localises to the cytoplasm. The enzyme catalyses N(2)-formyl-N(1)-(5-phospho-beta-D-ribosyl)glycinamide + L-glutamine + ATP + H2O = 2-formamido-N(1)-(5-O-phospho-beta-D-ribosyl)acetamidine + L-glutamate + ADP + phosphate + H(+). The protein operates within purine metabolism; IMP biosynthesis via de novo pathway; 5-amino-1-(5-phospho-D-ribosyl)imidazole from N(2)-formyl-N(1)-(5-phospho-D-ribosyl)glycinamide: step 1/2. Part of the phosphoribosylformylglycinamidine synthase complex involved in the purines biosynthetic pathway. Catalyzes the ATP-dependent conversion of formylglycinamide ribonucleotide (FGAR) and glutamine to yield formylglycinamidine ribonucleotide (FGAM) and glutamate. The FGAM synthase complex is composed of three subunits. PurQ produces an ammonia molecule by converting glutamine to glutamate. PurL transfers the ammonia molecule to FGAR to form FGAM in an ATP-dependent manner. PurS interacts with PurQ and PurL and is thought to assist in the transfer of the ammonia molecule from PurQ to PurL. The chain is Phosphoribosylformylglycinamidine synthase subunit PurL from Cereibacter sphaeroides (strain KD131 / KCTC 12085) (Rhodobacter sphaeroides).